Consider the following 1345-residue polypeptide: MESKALLAVALWFCVETRAASVGLPGDFLHPPKLSTQKDILTILANTTLQITCRGQRDLDWLWPNAQRDSEERVLVTECGGGDSIFCKTLTIPRVVGNDTGAYKCSYRDVDIASTVYVYVRDYRSPFIASVSDQHGIVYITENKNKTVVIPCRGSISNLNVSLCARYPEKRFVPDGNRISWDSEIGFTLPSYMISYAGMVFCEAKINDETYQSIMYIVVVVGYRIYDVILSPPHEIELSAGEKLVLNCTARTELNVGLDFTWHSPPSKSHHKKIVNRDVKPFPGTVAKMFLSTLTIESVTKSDQGEYTCVASSGRMIKRNRTFVRVHTKPFIAFGSGMKSLVEATVGSQVRIPVKYLSYPAPDIKWYRNGRPIESNYTMIVGDELTIMEVTERDAGNYTVILTNPISMEKQSHMVSLVVNVPPQIGEKALISPMDSYQYGTMQTLTCTVYANPPLHHIQWYWQLEEACSYRPGQTSPYACKEWRHVEDFQGGNKIEVTKNQYALIEGKNKTVSTLVIQAANVSALYKCEAINKAGRGERVISFHVIRGPEITVQPAAQPTEQESVSLLCTADRNTFENLTWYKLGSQATSVHMGESLTPVCKNLDALWKLNGTMFSNSTNDILIVAFQNASLQDQGDYVCSAQDKKTKKRHCLVKQLIILERMAPMITGNLENQTTTIGETIEVTCPASGNPTPHITWFKDNETLVEDSGIVLRDGNRNLTIRRVRKEDGGLYTCQACNVLGCARAETLFIIEGAQEKTNLEVIILVGTAVIAMFFWLLLVIVLRTVKRANEGELKTGYLSIVMDPDELPLDERCERLPYDASKWEFPRDRLKLGKPLGRGAFGQVIEADAFGIDKTATCKTVAVKMLKEGATHSEHRALMSELKILIHIGHHLNVVNLLGACTKPGGPLMVIVEFCKFGNLSTYLRGKRNEFVPYKSKGARFRQGKDYVGELSVDLKRRLDSITSSQSSASSGFVEEKSLSDVEEEEASEELYKDFLTLEHLICYSFQVAKGMEFLASRKCIHRDLAARNILLSEKNVVKICDFGLARDIYKDPDYVRKGDARLPLKWMAPETIFDRVYTIQSDVWSFGVLLWEIFSLGASPYPGVKIDEEFCRRLKEGTRMRAPDYTTPEMYQTMLDCWHEDPNQRPSFSELVEHLGNLLQANAQQDGKDYIVLPMSETLSMEEDSGLSLPTSPVSCMEEEEVCDPKFHYDNTAGISHYLQNSKRKSRPVSVKTFEDIPLEEPEVKVIPDDSQTDSGMVLASEELKTLEDRNKLSPSFGGMMPSKSRESVASEGSNQTSGYQSGYHSDDTDTTVYSSDEAGLLKMVDAAVHADSGTTLRSPPV.

Positions 1–19 are cleaved as a signal peptide; the sequence is MESKALLAVALWFCVETRA. Residues 20 to 762 lie on the Extracellular side of the membrane; sequence ASVGLPGDFL…EGAQEKTNLE (743 aa). Residues Asn46, Asn98, Asn145, Asn160, and Asn247 are each glycosylated (N-linked (GlcNAc...) asparagine). Ig-like C2-type domains follow at residues 46–111, 143–209, 226–325, 330–416, 423–542, 549–656, and 665–751; these read NTTL…RDVD, NKNK…INDE, YDVI…TFVR, PFIA…HMVS, PQIG…RVIS, PEIT…LVKQ, and PMIT…TLFI. A disulfide bridge connects residues Cys53 and Cys105. Cys152 and Cys202 are oxidised to a cystine. Cys248 and Cys309 are joined by a disulfide. N-linked (GlcNAc...) asparagine glycans are attached at residues Asn320, Asn376, Asn397, Asn509, Asn521, Asn578, Asn611, Asn617, Asn629, Asn673, Asn702, and Asn719. Intrachain disulfides connect Cys447-Cys528 and Cys569-Cys640. The cysteines at positions 686 and 735 are disulfide-linked. A helical transmembrane segment spans residues 763-783; the sequence is VIILVGTAVIAMFFWLLLVIV. The Cytoplasmic portion of the chain corresponds to 784 to 1345; the sequence is LRTVKRANEG…SGTTLRSPPV (562 aa). Tyr799 carries the post-translational modification Phosphotyrosine. The region spanning 832-1160 is the Protein kinase domain; that stretch reads LKLGKPLGRG…FSELVEHLGN (329 aa). Residues 838–846 and Lys866 each bind ATP; that span reads LGRGAFGQV. Tyr949 carries the phosphotyrosine; by autocatalysis modification. Residues Ser980 and Ser982 each carry the phosphoserine modification. Tyr994 bears the Phosphotyrosine; by autocatalysis mark. A disulfide bridge links Cys1022 with Cys1043. The active-site Proton acceptor is Asp1026. Residues Tyr1052, Tyr1057, Tyr1173, and Tyr1212 each carry the phosphotyrosine; by autocatalysis modification. Phosphoserine is present on residues Ser1229 and Ser1233. The residue at position 1236 (Thr1236) is a Phosphothreonine. The tract at residues 1272-1316 is disordered; the sequence is DRNKLSPSFGGMMPSKSRESVASEGSNQTSGYQSGYHSDDTDTTV. Residues 1294–1307 are compositionally biased toward polar residues; it reads SEGSNQTSGYQSGY. Phosphotyrosine; by autocatalysis occurs at positions 1303, 1307, and 1317.

Belongs to the protein kinase superfamily. Tyr protein kinase family. CSF-1/PDGF receptor subfamily. Homodimer in the presence of bound dimeric VEGFA, VEGFC or VEGFD ligands; monomeric in the absence of bound ligands. Can also form heterodimers with FLT1/VEGFR1 and KDR/VEGFR2. Interacts (tyrosine phosphorylated) with LFYN, NCK1, PLCG1. Interacts (tyrosine-phosphorylated active form preferentially) with DAB2IP (via C2 domain and active form preferentially); the interaction occurs at the late phase of VEGFA response and inhibits KDR/VEGFR2 activity. Interacts with SHBSH2D2A/TSAD, GRB2, MYOF, CBL and PDCD6. Interacts (via C-terminus domain) with ERN1 (via kinase domain); the interaction is facilitated in a XBP1 isoform 1- and vascular endothelial growth factor (VEGF)-dependent manner in endothelial cells. Interacts (via juxtamembrane region) with chaperone PDCL3 (via thioredoxin fold region); the interaction leads to increased KDR/VEGFR2 abundance through inhibition of its ubiquitination and degradation. Interacts (tyrosine phosphorylated) with CCDC88A/GIV (via SH2-like region); binding requires autophosphorylation of the KDR/VEGFR2 C-terminal region. Interacts with isoform 2 of BSG. Interacts with SLC31A1; this interaction is induced upon VEGFA stimulation leading to SLC31A1 and KDR subsequent co-internalization to early endosomes, thereby activating KDR downstream signaling in endothelial cells. In terms of processing, N-glycosylated. Post-translationally, ubiquitinated. Tyrosine phosphorylation of the receptor promotes its poly-ubiquitination, leading to its degradation via the proteasome or lysosomal proteases. Autophosphorylated on tyrosine residues upon ligand binding. Autophosphorylation occurs in trans, i.e. one subunit of the dimeric receptor phosphorylates tyrosine residues on the other subunit. Phosphorylation at Tyr-949 is important for interaction with SH2D2A/TSAD and VEGFA-mediated reorganization of the actin cytoskeleton. Phosphorylation at Tyr-1173 is important for interaction with PLCG1 and SHB. Phosphorylation at Tyr-1212 is important for interaction with NCK1 and FYN. Dephosphorylated by PTPRJ at Tyr-799, Tyr-949, Tyr-994, Tyr-1052, Tyr-1057, Tyr-1173 and Tyr-1212. In terms of processing, the inhibitory disulfide bond between Cys-1022 and Cys-1043 may serve as a specific molecular switch for H(2)S-induced modification that regulates KDR/VEGFR2 function. Expressed in endothelial cells (at protein level). Detected in embryonic endothelial cells, as well as hematopoietic stem and progenitor cells. Detected in vascular endothelium. Expressed at high levels in adult heart, lung, kidney, brain and skeletal muscle, but is also expressed at lower levels in most other adult tissues.

The protein localises to the cell junction. The protein resides in the endoplasmic reticulum. It is found in the cell membrane. Its subcellular location is the cytoplasm. It localises to the nucleus. The protein localises to the cytoplasmic vesicle. The protein resides in the early endosome. It is found in the secreted. The enzyme catalyses L-tyrosyl-[protein] + ATP = O-phospho-L-tyrosyl-[protein] + ADP + H(+). Its activity is regulated as follows. Present in an inactive conformation in the absence of bound ligand. Binding of VEGFA, VEGFC or VEGFD leads to dimerization and activation by autophosphorylation on tyrosine residues. May be regulated by hydrogen sulfide (H(2)S) levels via a sensitive intracellular disulfide bond. Functionally, tyrosine-protein kinase that acts as a cell-surface receptor for VEGFA, VEGFC and VEGFD. Plays an essential role in the regulation of angiogenesis, vascular development, vascular permeability, and embryonic hematopoiesis. Promotes proliferation, survival, migration and differentiation of endothelial cells. Promotes reorganization of the actin cytoskeleton. Isoforms lacking a transmembrane domain, such as isoform 2, may function as decoy receptors for VEGFA, VEGFC and/or VEGFD. Isoform 2 plays an important role as a negative regulator of VEGFA- and VEGFC-mediated lymphangiogenesis by limiting the amount of free VEGFA and/or VEGFC and by preventing their binding to FLT4. Modulates FLT1 and FLT4 signaling by forming heterodimers. Binding of vascular growth factors to isoform 1 leads to the activation of several signaling cascades. Activation of PLCG1 leads to the production of the cellular signaling molecules diacylglycerol and inositol 1,4,5-trisphosphate and the activation of protein kinase C. Mediates activation of MAPK1/ERK2, MAPK3/ERK1 and the MAP kinase signaling pathway, as well as of the AKT1 signaling pathway. Mediates phosphorylation of PIK3R1, the regulatory subunit of phosphatidylinositol 3-kinase, reorganization of the actin cytoskeleton and activation of PTK2/FAK1. Required for VEGFA-mediated induction of NOS2 and NOS3, leading to the production of the signaling molecule nitric oxide (NO) by endothelial cells. Phosphorylates PLCG1. Promotes phosphorylation of FYN, NCK1, NOS3, PIK3R1, PTK2/FAK1 and SRC. The sequence is that of Vascular endothelial growth factor receptor 2 from Mus musculus (Mouse).